The primary structure comprises 345 residues: Fe(3+) ions import ATP-binding protein FbpC (345 aa).

In terms of domain architecture, ABC transporter spans 3–233 (LSLKAATVRF…PADEFVARFL (231 aa)). Residue 35–42 (GPSGSGKS) coordinates ATP.

It belongs to the ABC transporter superfamily. Fe(3+) ion importer (TC 3.A.1.10) family. In terms of assembly, the complex is composed of two ATP-binding proteins (FbpC), two transmembrane proteins (FbpB) and a solute-binding protein (FbpA).

Its subcellular location is the cell membrane. It catalyses the reaction Fe(3+)(out) + ATP + H2O = Fe(3+)(in) + ADP + phosphate + H(+). In terms of biological role, part of the ABC transporter complex FbpABC involved in Fe(3+) ions import. Responsible for energy coupling to the transport system. The sequence is that of Fe(3+) ions import ATP-binding protein FbpC from Streptomyces avermitilis (strain ATCC 31267 / DSM 46492 / JCM 5070 / NBRC 14893 / NCIMB 12804 / NRRL 8165 / MA-4680).